Consider the following 381-residue polypeptide: Succinyl-diaminopimelate desuccinylase (381 aa).

His-68 provides a ligand contact to Zn(2+). Asp-70 is a catalytic residue. Asp-101 is a binding site for Zn(2+). The Proton acceptor role is filled by Glu-135. Residues Glu-136, Glu-164, and His-350 each contribute to the Zn(2+) site.

The protein belongs to the peptidase M20A family. DapE subfamily. In terms of assembly, homodimer. It depends on Zn(2+) as a cofactor. Co(2+) is required as a cofactor.

It carries out the reaction N-succinyl-(2S,6S)-2,6-diaminopimelate + H2O = (2S,6S)-2,6-diaminopimelate + succinate. Its pathway is amino-acid biosynthesis; L-lysine biosynthesis via DAP pathway; LL-2,6-diaminopimelate from (S)-tetrahydrodipicolinate (succinylase route): step 3/3. In terms of biological role, catalyzes the hydrolysis of N-succinyl-L,L-diaminopimelic acid (SDAP), forming succinate and LL-2,6-diaminopimelate (DAP), an intermediate involved in the bacterial biosynthesis of lysine and meso-diaminopimelic acid, an essential component of bacterial cell walls. The protein is Succinyl-diaminopimelate desuccinylase (dapE) of Neisseria meningitidis serogroup B (strain ATCC BAA-335 / MC58).